Reading from the N-terminus, the 477-residue chain is Probable cytosolic Fe-S cluster assembly factor CG17683 (477 aa).

[4Fe-4S] cluster is bound by residues cysteine 23, cysteine 68, cysteine 71, cysteine 74, cysteine 187, cysteine 243, cysteine 395, and cysteine 399.

It belongs to the NARF family.

Functionally, component of the cytosolic iron-sulfur (Fe/S) protein assembly machinery. Required for maturation of extramitochondrial Fe/S proteins. This is Probable cytosolic Fe-S cluster assembly factor CG17683 from Drosophila melanogaster (Fruit fly).